The chain runs to 1335 residues: Membrane-associated phosphatidylinositol transfer protein 2 (1335 aa).

Disordered stretches follow at residues 32-51 and 262-341; these read ETHGQGSGVEILENRPYTDG and EEGP…SEEE. Residues 275-286 show a composition bias toward polar residues; the sequence is KDQASGTTSDPG. The segment covering 299-319 has biased composition (low complexity); the sequence is KQWSTSSKSSRSSKRGASPSR. Phosphoserine is present on residues serine 334, serine 338, serine 365, and serine 586. The segment at 606 to 657 is disordered; sequence HCSGGSGGGGSGGSSLESSRHLSRSNIDIPRSNGTEDSRRQLPRKRSDSSTY. The segment covering 609–618 has biased composition (gly residues); the sequence is GGSGGGGSGG. Serine 630 is subject to Phosphoserine. Residues 639-653 show a composition bias toward basic and acidic residues; it reads GTEDSRRQLPRKRSD. A phosphoserine mark is found at serine 686, serine 687, and serine 688. Positions 701-949 constitute a DDHD domain; the sequence is FDFEIADLFL…VSFLLRQVMR (249 aa). Arginine 814 is subject to Omega-N-methylarginine. The disordered stretch occupies residues 861–880; sequence ALPPPSPTTQGPRARARQVS. A Phosphoserine modification is found at serine 1263. The tract at residues 1282 to 1313 is disordered; that stretch reads TISAQPSGPSHRHDRTQTQMDSEQRGQRSMSV. Polar residues predominate over residues 1298–1313; that stretch reads QTQMDSEQRGQRSMSV.

It belongs to the PtdIns transfer protein family. PI transfer class IIA subfamily. As to quaternary structure, interacts with CPNE4 (via VWFA domain). Interacts with PTK2B via its C-terminus. As to expression, detected in retina and in the dentate gyrus of the cerebellum.

The protein localises to the endomembrane system. It is found in the cytoplasm. It localises to the cytoskeleton. Functionally, catalyzes the transfer of phosphatidylinositol and phosphatidylcholine between membranes (in vitro). Binds calcium ions. This chain is Membrane-associated phosphatidylinositol transfer protein 2 (Pitpnm2), found in Mus musculus (Mouse).